The following is a 396-amino-acid chain: Lipid-A-disaccharide synthase (396 aa).

This sequence belongs to the LpxB family.

The enzyme catalyses a lipid X + a UDP-2-N,3-O-bis[(3R)-3-hydroxyacyl]-alpha-D-glucosamine = a lipid A disaccharide + UDP + H(+). It participates in bacterial outer membrane biogenesis; LPS lipid A biosynthesis. Condensation of UDP-2,3-diacylglucosamine and 2,3-diacylglucosamine-1-phosphate to form lipid A disaccharide, a precursor of lipid A, a phosphorylated glycolipid that anchors the lipopolysaccharide to the outer membrane of the cell. In Nitrobacter hamburgensis (strain DSM 10229 / NCIMB 13809 / X14), this protein is Lipid-A-disaccharide synthase.